The following is a 96-amino-acid chain: UPF0235 protein YggU (96 aa).

The protein belongs to the UPF0235 family.

The sequence is that of UPF0235 protein YggU from Escherichia coli O157:H7.